The primary structure comprises 638 residues: LEAF RUST 10 DISEASE-RESISTANCE LOCUS RECEPTOR-LIKE PROTEIN KINASE-like 2.1 (638 aa).

The N-terminal stretch at 1-29 (MINLSLYQTNSLSYTIIWMLFVIPSCVLS) is a signal peptide. The Extracellular segment spans residues 30 to 264 (VDERQKHCSP…EHTCGKMGIG (235 aa)). 5 N-linked (GlcNAc...) asparagine glycosylation sites follow: asparagine 69, asparagine 114, asparagine 136, asparagine 204, and asparagine 239. The helical transmembrane segment at 265-285 (IGLGCGFLGATLITVCLLCFF) threads the bilayer. Topologically, residues 286–638 (FQKRRTSHHL…YTEVFIGSTS (353 aa)) are cytoplasmic. Residues 321–609 (KLFSHTLGKG…VLEVPPKPSI (289 aa)) enclose the Protein kinase domain. Residues 327–335 (LGKGGFGTV) and lysine 349 contribute to the ATP site. Residue tyrosine 393 is modified to Phosphotyrosine. The Proton acceptor role is filled by aspartate 444. At threonine 484 the chain carries Phosphothreonine.

This sequence belongs to the protein kinase superfamily. Ser/Thr protein kinase family.

It is found in the membrane. The catalysed reaction is L-seryl-[protein] + ATP = O-phospho-L-seryl-[protein] + ADP + H(+). The enzyme catalyses L-threonyl-[protein] + ATP = O-phospho-L-threonyl-[protein] + ADP + H(+). This Arabidopsis thaliana (Mouse-ear cress) protein is LEAF RUST 10 DISEASE-RESISTANCE LOCUS RECEPTOR-LIKE PROTEIN KINASE-like 2.1.